A 1765-amino-acid polypeptide reads, in one-letter code: RANBP2-like and GRIP domain-containing protein 5/6 (1765 aa).

Thr-19 carries the phosphothreonine modification. Ser-21 carries the post-translational modification Phosphoserine. TPR repeat units lie at residues Ser-26–Asp-59, Pro-60–Gln-93, and Glu-648–Trp-681. 2 disordered regions span residues Gly-760 to Thr-804 and Phe-924 to Gly-945. Low complexity predominate over residues Ser-778 to Pro-797. Residues Asn-931–Glu-941 are compositionally biased toward basic and acidic residues. Residues His-1036–Asp-1172 enclose the RanBD1 1 domain. Disordered stretches follow at residues Lys-1214 to Glu-1247 and Ala-1306 to Asp-1330. Polar residues predominate over residues Ile-1235–Pro-1244. The segment covering Thr-1317–Arg-1329 has biased composition (acidic residues). Residues Tyr-1333–Lys-1469 enclose the RanBD1 2 domain. The span at Asn-1580–Glu-1593 shows a compositional bias: polar residues. Residues Asn-1580 to Ser-1621 form a disordered region. Residues Ser-1594–Val-1617 show a composition bias toward basic and acidic residues. In terms of domain architecture, GRIP spans Arg-1702–Val-1752.

In terms of tissue distribution, expressed in testis.

It localises to the cytoplasm. The sequence is that of RANBP2-like and GRIP domain-containing protein 5/6 (RGPD5) from Homo sapiens (Human).